The primary structure comprises 156 residues: Neuroactive polyprotein R15 (156 aa).

The signal sequence occupies residues 1 to 26; that stretch reads MDSAGLHINFRLSHVLTVVTCILYIL. Residues 27-48 constitute a propeptide that is removed on maturation; the sequence is PPTTTAYSLPAPGKAAFQHQLS. The cysteines at positions 74 and 81 are disulfide-linked. The residue at position 120 (glutamine 120) is a Pyrrolidone carboxylic acid.

Expressed within the abdominal ganglion in neurons R15, RB(HE), the two L9(G) gill motoneurons, and L40 interneuron, all are parts of autonomic control circuit that contributes to implementing a central command to coordinate autonomic activity with escape locomotion.

Its subcellular location is the secreted. Functionally, the alpha-1 peptide acts as an osmoregulatory peptide, increasing blood volume, and also modulates the activity of a set of cardiac motor neurons that control heart rate. The chain is Neuroactive polyprotein R15 from Aplysia californica (California sea hare).